A 322-amino-acid polypeptide reads, in one-letter code: tRNA uridine(34) hydroxylase (322 aa).

Residues 125–219 (QQEDTIVVDA…YGKDPEVQGE (95 aa)) enclose the Rhodanese domain. Residue Cys-179 is the Cysteine persulfide intermediate of the active site.

Belongs to the TrhO family.

The catalysed reaction is uridine(34) in tRNA + AH2 + O2 = 5-hydroxyuridine(34) in tRNA + A + H2O. Its function is as follows. Catalyzes oxygen-dependent 5-hydroxyuridine (ho5U) modification at position 34 in tRNAs. The sequence is that of tRNA uridine(34) hydroxylase from Bacillus licheniformis (strain ATCC 14580 / DSM 13 / JCM 2505 / CCUG 7422 / NBRC 12200 / NCIMB 9375 / NCTC 10341 / NRRL NRS-1264 / Gibson 46).